The sequence spans 468 residues: Cysteine--tRNA ligase (468 aa).

C29 contacts Zn(2+). A 'HIGH' region motif is present at residues 31–41 (PTVYNYIHIGN). Zn(2+) is bound by residues C209, H234, and E238. The 'KMSKS' region motif lies at 266–270 (KMSKS). An ATP-binding site is contributed by K269. S270 carries the post-translational modification Phosphoserine.

The protein belongs to the class-I aminoacyl-tRNA synthetase family. Monomer. The cofactor is Zn(2+).

Its subcellular location is the cytoplasm. The catalysed reaction is tRNA(Cys) + L-cysteine + ATP = L-cysteinyl-tRNA(Cys) + AMP + diphosphate. This Oceanobacillus iheyensis (strain DSM 14371 / CIP 107618 / JCM 11309 / KCTC 3954 / HTE831) protein is Cysteine--tRNA ligase.